A 115-amino-acid polypeptide reads, in one-letter code: Large ribosomal subunit protein bL19 (115 aa).

This sequence belongs to the bacterial ribosomal protein bL19 family.

Functionally, this protein is located at the 30S-50S ribosomal subunit interface and may play a role in the structure and function of the aminoacyl-tRNA binding site. The polypeptide is Large ribosomal subunit protein bL19 (Desulforudis audaxviator (strain MP104C)).